The following is a 313-amino-acid chain: uncharacterized protein (313 aa).

Position 29–61 (29–61 (ALVTGGGTGLGKAIATTFAHLGASVAIAARRLD)) interacts with NADP(+).

It belongs to the short-chain dehydrogenases/reductases (SDR) family. 2,4-dienoyl-CoA reductase subfamily.

This is an uncharacterized protein from Caenorhabditis elegans.